The chain runs to 206 residues: Heterochromatin protein 1 (206 aa).

2 disordered regions span residues Met-1–Tyr-24 and Gly-47–Arg-145. A phosphoserine mark is found at Ser-11 and Ser-15. A Chromo 1 domain is found at Tyr-24–Ala-82. A compositionally biased stretch (low complexity) spans Glu-50–Asn-60. Residues Ala-72–Gln-98 show a composition bias toward basic and acidic residues. The binds to Su(var)39 stretch occupies residues Lys-95 to Asp-206. Phosphoserine is present on residues Ser-102, Ser-103, and Ser-113. Phosphothreonine occurs at positions 127, 128, and 134. A Chromo 2 domain is found at Leu-147–Glu-205.

Homodimer. Probably associates with Su(var)3-9. Interacts with Mcm10. Interacts (via chromoshadow domain) with piwi (via N-terminal region). Interacts with Rrp6. Associates with and may be part of the HipHop-HOAP telomere capping complex but is not required for its stability or telomere localization. Interacts (via the chromo domain 2 (chromoshadow domain) and the hinge region between chromo domains 1 and 2) with cav/HOAP (via C-terminus); the interaction is direct. Each molecule of cav/HOAP interacts with 2 molecules of Su(var)205/HP1. Interacts with HipHop (via N-terminus). Interacts with moi/modigliani; the interaction is direct. Interacts (via chromo domain 1) with His3/histone 3 (via N-terminal tail methylated at 'Lys-10'); the interaction is direct. Salivary gland (at protein level).

It is found in the nucleus. The protein resides in the nucleoplasm. The protein localises to the chromosome. It localises to the telomere. Functionally, structural component of heterochromatin, involved in gene repression and the modification of position-effect-variegation. Recognizes and binds histone H3 tails methylated at 'Lys-9', leading to epigenetic repression. Stabilizes chromatin-associated RNAs probably by binding to them and thereby preventing their degradation. Associates with, and may be a part of, the HipHop-HOAP complex that recruits the MTV complex to form the terminin telomere-capping complex, which binds to chromosome ends in a sequence-independent manner and prevents telomere fusion. Telomere capping is independent of the origin recognition complex (ORC). The polypeptide is Heterochromatin protein 1 (Drosophila melanogaster (Fruit fly)).